The chain runs to 298 residues: FH protein interacting protein FIP2 (298 aa).

The region spanning S9–S80 is the BTB domain. 4 consecutive Pentapeptide repeat domains span residues E129–R165, T166–L203, A216–G255, and A256–G295.

Interacts with FH1. Expressed in all tissues but preferentially in roots and flowers.

It participates in protein modification; protein ubiquitination. Functionally, may act as a substrate-specific adapter of an E3 ubiquitin-protein ligase complex (CUL3-RBX1-BTB) which mediates the ubiquitination and subsequent proteasomal degradation of target proteins. In Arabidopsis thaliana (Mouse-ear cress), this protein is FH protein interacting protein FIP2 (FIP2).